The following is a 251-amino-acid chain: uncharacterized protein (251 aa).

This is an uncharacterized protein from Mycoplasma pneumoniae (strain ATCC 29342 / M129 / Subtype 1) (Mycoplasmoides pneumoniae).